A 391-amino-acid chain; its full sequence is Elongation factor Tu (391 aa).

Residues 10–201 form the tr-type G domain; the sequence is KPHVNIGTIG…AVDSYIPTPE (192 aa). Residues 19-26 form a G1 region; sequence GHVDHGKT. 19–26 is a GTP binding site; the sequence is GHVDHGKT. Residue T26 coordinates Mg(2+). Positions 55 to 59 are G2; that stretch reads GITIS. Residues 76 to 79 are G3; sequence DCPG. GTP-binding positions include 76-80 and 131-134; these read DCPGH and NKCD. Positions 131-134 are G4; it reads NKCD. The segment at 169–171 is G5; it reads SAL.

Belongs to the TRAFAC class translation factor GTPase superfamily. Classic translation factor GTPase family. EF-Tu/EF-1A subfamily. As to quaternary structure, monomer.

The protein localises to the cytoplasm. The catalysed reaction is GTP + H2O = GDP + phosphate + H(+). Functionally, GTP hydrolase that promotes the GTP-dependent binding of aminoacyl-tRNA to the A-site of ribosomes during protein biosynthesis. This is Elongation factor Tu from Brucella canis (strain ATCC 23365 / NCTC 10854 / RM-666).